Here is a 473-residue protein sequence, read N- to C-terminus: MAVKTYNAGVKEYRETYWDPNYTPADTDLLAVFKITPQPGVPREEAAAAVAAESSTGTWTTVWTDLLTDLDYYKGRAYRIEDVPGQDEQFYAFIAYPIDLFEEGSVVNVFTSLVGNVFGFKAVRGLRLEDVRFPLAYVMTCGGPPHGIQVERDIMNKYGRPLLGCTIKPKLGLSAKNYGRAVYECLRGGLDFTKDDENVNSQPFMRWRQRFDFVMEAIEKAEAETGERKGHYLNVTAPTPEEMYKRAEYAKEIGAPIIMHDFITGGFCANTGLANWCRNNGMLLHIHRAMHAVMDRNPNHGIHFRVFTKMLRLSGGDHLHTGTVVGKLEGDRQATLGWIDLLRERSIKEDRSRGIFFDQEWGAMPGVFAVASGGIHVWHMPALLSIFGDDAVFQFGGGTLGHPWGNAAGAAANRVALEACVEARNEGRQLEKEGKEILTEAAKSSPELKAAMETWKEIKFEFDTVDKLDVAHR.

Substrate contacts are provided by Asn116 and Thr166. The Proton acceptor role is filled by Lys168. Lys170 provides a ligand contact to substrate. 3 residues coordinate Mg(2+): Lys194, Asp196, and Glu197. Position 194 is an N6-carboxylysine (Lys194). His287 acts as the Proton acceptor in catalysis. Substrate-binding residues include Arg288, His320, and Ser372.

Belongs to the RuBisCO large chain family. Type I subfamily. In terms of assembly, heterohexadecamer of 8 large chains and 8 small chains. It depends on Mg(2+) as a cofactor.

The catalysed reaction is 2 (2R)-3-phosphoglycerate + 2 H(+) = D-ribulose 1,5-bisphosphate + CO2 + H2O. It catalyses the reaction D-ribulose 1,5-bisphosphate + O2 = 2-phosphoglycolate + (2R)-3-phosphoglycerate + 2 H(+). In terms of biological role, ruBisCO catalyzes two reactions: the carboxylation of D-ribulose 1,5-bisphosphate, the primary event in carbon dioxide fixation, as well as the oxidative fragmentation of the pentose substrate. Both reactions occur simultaneously and in competition at the same active site. The chain is Ribulose bisphosphate carboxylase large chain from Methylococcus capsulatus (strain ATCC 33009 / NCIMB 11132 / Bath).